A 507-amino-acid chain; its full sequence is Anthranilate synthase component 1 (507 aa).

Residue S65 coordinates L-tryptophan. S81 carries the post-translational modification Phosphoserine. T223 is modified (phosphothreonine). 280–282 (PYL) contacts L-tryptophan. 316-317 (GT) provides a ligand contact to chorismate. E343 contributes to the Mg(2+) binding site. Chorismate is bound by residues Y431, R452, 466–468 (GGG), and G468. E481 is a Mg(2+) binding site.

The protein belongs to the anthranilate synthase component I family. As to quaternary structure, tetramer of two components I and two components II. Requires Mg(2+) as cofactor.

The enzyme catalyses chorismate + L-glutamine = anthranilate + pyruvate + L-glutamate + H(+). The protein operates within amino-acid biosynthesis; L-tryptophan biosynthesis; L-tryptophan from chorismate: step 1/5. The chain is Anthranilate synthase component 1 (TRP2) from Saccharomyces cerevisiae (strain ATCC 204508 / S288c) (Baker's yeast).